The primary structure comprises 233 residues: U2 small nuclear ribonucleoprotein A' (233 aa).

LRR repeat units follow at residues 20–40, 42–63, 65–86, and 89–110; these read KLTL…AITQ, KYQV…PKRF, NLQC…SFPS, and HITS…FKDK. One can recognise an LRRCT domain in the interval 122-160; that stretch reads NPITEMENYRYFIIWLIPSLKVLDFKKVKQAERKTSEDM.

This sequence belongs to the U2 small nuclear ribonucleoprotein A family. In terms of assembly, associated with the spliceosome.

The protein resides in the nucleus. Involved in pre-mRNA splicing. In Candida albicans (strain SC5314 / ATCC MYA-2876) (Yeast), this protein is U2 small nuclear ribonucleoprotein A' (LEA1).